The primary structure comprises 169 residues: MSAIIDAKKQEVDIIAEQLKNSVSTVIVDYRGLSVAEVTELRSQLREAGVEYKVLKNTMVRRAAQQAGIDGLDEFLVGPTAVATSTEDVVAPAKVIAGFAKEHQALEIKTGVMEGNVISAEEVNTVGTLPSHDGLVSMLLSVLQAPVRNFAYAVKAVGEDKESKEESAE.

The protein belongs to the universal ribosomal protein uL10 family. Part of the ribosomal stalk of the 50S ribosomal subunit. The N-terminus interacts with L11 and the large rRNA to form the base of the stalk. The C-terminus forms an elongated spine to which L12 dimers bind in a sequential fashion forming a multimeric L10(L12)X complex.

Functionally, forms part of the ribosomal stalk, playing a central role in the interaction of the ribosome with GTP-bound translation factors. The polypeptide is Large ribosomal subunit protein uL10 (Staphylococcus saprophyticus subsp. saprophyticus (strain ATCC 15305 / DSM 20229 / NCIMB 8711 / NCTC 7292 / S-41)).